The primary structure comprises 856 residues: Leucine--tRNA ligase (856 aa).

A 'HIGH' region motif is present at residues 42 to 52; it reads PYPSGNLHMGH. The 'KMSKS' region motif lies at 617–621; the sequence is KMSKS. Lys620 contributes to the ATP binding site.

The protein belongs to the class-I aminoacyl-tRNA synthetase family.

The protein resides in the cytoplasm. It catalyses the reaction tRNA(Leu) + L-leucine + ATP = L-leucyl-tRNA(Leu) + AMP + diphosphate. In Rippkaea orientalis (strain PCC 8801 / RF-1) (Cyanothece sp. (strain PCC 8801)), this protein is Leucine--tRNA ligase.